Consider the following 562-residue polypeptide: Actin-related protein 8 (562 aa).

Residue 248–251 (DVGD) coordinates ATP.

It belongs to the actin family. ARP8 subfamily. In terms of assembly, component of the chromatin remodeling Ino80 complex. Exists as monomers and dimers, but the dimer is most probably the biologically relevant form required for stable interactions with histones that exploits the twofold symmetry of the nucleosome core.

Its subcellular location is the nucleus. In terms of biological role, plays an important role in the functional organization of mitotic chromosomes. Exhibits low basal ATPase activity, and unable to polymerize. Functionally, proposed core component of the chromatin remodeling INO80 complex which is involved in transcriptional regulation, DNA replication and probably DNA repair. Strongly prefer nucleosomes and H3-H4 tetramers over H2A-H2B dimers, suggesting it may act as a nucleosome recognition module within the complex. The protein is Actin-related protein 8 of Aedes aegypti (Yellowfever mosquito).